The following is a 407-amino-acid chain: Imidazolonepropionase (407 aa).

2 residues coordinate Fe(3+): His68 and His70. Zn(2+)-binding residues include His68 and His70. 4-imidazolone-5-propanoate-binding residues include Arg77, Tyr140, and His173. Tyr140 is a binding site for N-formimidoyl-L-glutamate. Position 238 (His238) interacts with Fe(3+). Residue His238 participates in Zn(2+) binding. Residue Gln241 coordinates 4-imidazolone-5-propanoate. Fe(3+) is bound at residue Asp313. Residue Asp313 participates in Zn(2+) binding. N-formimidoyl-L-glutamate is bound by residues Asn315 and Gly317. Residue Thr318 participates in 4-imidazolone-5-propanoate binding.

Belongs to the metallo-dependent hydrolases superfamily. HutI family. Zn(2+) serves as cofactor. Requires Fe(3+) as cofactor.

The protein localises to the cytoplasm. It carries out the reaction 4-imidazolone-5-propanoate + H2O = N-formimidoyl-L-glutamate. Its pathway is amino-acid degradation; L-histidine degradation into L-glutamate; N-formimidoyl-L-glutamate from L-histidine: step 3/3. Catalyzes the hydrolytic cleavage of the carbon-nitrogen bond in imidazolone-5-propanoate to yield N-formimidoyl-L-glutamate. It is the third step in the universal histidine degradation pathway. The polypeptide is Imidazolonepropionase (Burkholderia mallei (strain ATCC 23344)).